We begin with the raw amino-acid sequence, 267 residues long: Hydroxyethylthiazole kinase 2 (267 aa).

M41 contacts substrate. 2 residues coordinate ATP: K116 and T166. G193 is a substrate binding site.

This sequence belongs to the Thz kinase family. The cofactor is Mg(2+).

The catalysed reaction is 5-(2-hydroxyethyl)-4-methylthiazole + ATP = 4-methyl-5-(2-phosphooxyethyl)-thiazole + ADP + H(+). The protein operates within cofactor biosynthesis; thiamine diphosphate biosynthesis; 4-methyl-5-(2-phosphoethyl)-thiazole from 5-(2-hydroxyethyl)-4-methylthiazole: step 1/1. Its function is as follows. Catalyzes the phosphorylation of the hydroxyl group of 4-methyl-5-beta-hydroxyethylthiazole (THZ). This is Hydroxyethylthiazole kinase 2 from Streptococcus pneumoniae serotype 4 (strain ATCC BAA-334 / TIGR4).